Reading from the N-terminus, the 542-residue chain is CTP synthase (542 aa).

The segment at 1 to 265 (MARYVFITGG…DSEVLSAFGI (265 aa)) is amidoligase domain. Serine 13 contributes to the CTP binding site. Serine 13 provides a ligand contact to UTP. 14 to 19 (SLGKGI) contributes to the ATP binding site. Tyrosine 54 lines the L-glutamine pocket. Position 71 (aspartate 71) interacts with ATP. 2 residues coordinate Mg(2+): aspartate 71 and glutamate 139. CTP-binding positions include 146 to 148 (DIE), 186 to 191 (KTKPTQ), and lysine 222. Residues 186–191 (KTKPTQ) and lysine 222 contribute to the UTP site. A Glutamine amidotransferase type-1 domain is found at 291–541 (TIAVVGKYTG…IEAAIEQSRL (251 aa)). Residue glycine 353 participates in L-glutamine binding. The active-site Nucleophile; for glutamine hydrolysis is the cysteine 380. Residues 381–384 (FGMQ), glutamate 404, and arginine 469 contribute to the L-glutamine site. Residues histidine 514 and glutamate 516 contribute to the active site.

Belongs to the CTP synthase family. In terms of assembly, homotetramer.

It carries out the reaction UTP + L-glutamine + ATP + H2O = CTP + L-glutamate + ADP + phosphate + 2 H(+). The enzyme catalyses L-glutamine + H2O = L-glutamate + NH4(+). It catalyses the reaction UTP + NH4(+) + ATP = CTP + ADP + phosphate + 2 H(+). The protein operates within pyrimidine metabolism; CTP biosynthesis via de novo pathway; CTP from UDP: step 2/2. Its activity is regulated as follows. Allosterically activated by GTP, when glutamine is the substrate; GTP has no effect on the reaction when ammonia is the substrate. The allosteric effector GTP functions by stabilizing the protein conformation that binds the tetrahedral intermediate(s) formed during glutamine hydrolysis. Inhibited by the product CTP, via allosteric rather than competitive inhibition. Catalyzes the ATP-dependent amination of UTP to CTP with either L-glutamine or ammonia as the source of nitrogen. Regulates intracellular CTP levels through interactions with the four ribonucleotide triphosphates. This chain is CTP synthase, found in Brucella melitensis biotype 1 (strain ATCC 23456 / CCUG 17765 / NCTC 10094 / 16M).